We begin with the raw amino-acid sequence, 135 residues long: uncharacterized protein (135 aa).

The segment at 1–80 (MRSSSLPGAR…QRGSCASANA (80 aa)) is disordered. A compositionally biased stretch (gly residues) spans 54–65 (GARGGGRRGWGG).

This is an uncharacterized protein from Homo sapiens (Human).